Consider the following 430-residue polypeptide: Histidinol dehydrogenase (430 aa).

Positions 129, 190, and 213 each coordinate NAD(+). The substrate site is built by serine 236, glutamine 258, and histidine 261. Zn(2+) contacts are provided by glutamine 258 and histidine 261. Residues glutamate 326 and histidine 327 each act as proton acceptor in the active site. The substrate site is built by histidine 327, aspartate 360, glutamate 414, and histidine 419. Aspartate 360 is a binding site for Zn(2+). Residue histidine 419 coordinates Zn(2+).

It belongs to the histidinol dehydrogenase family. It depends on Zn(2+) as a cofactor.

The enzyme catalyses L-histidinol + 2 NAD(+) + H2O = L-histidine + 2 NADH + 3 H(+). The protein operates within amino-acid biosynthesis; L-histidine biosynthesis; L-histidine from 5-phospho-alpha-D-ribose 1-diphosphate: step 9/9. In terms of biological role, catalyzes the sequential NAD-dependent oxidations of L-histidinol to L-histidinaldehyde and then to L-histidine. The chain is Histidinol dehydrogenase from Caldanaerobacter subterraneus subsp. tengcongensis (strain DSM 15242 / JCM 11007 / NBRC 100824 / MB4) (Thermoanaerobacter tengcongensis).